The sequence spans 889 residues: Translation initiation factor IF-2 (889 aa).

The span at 115–236 (EAEAQAKAEA…EAERYSDHHI (122 aa)) shows a compositional bias: basic and acidic residues. The interval 115 to 293 (EAEAQAKAEA…RNRSTAPESM (179 aa)) is disordered. Residues 257–270 (GRRARNKNTAKTKR) show a composition bias toward basic residues. A compositionally biased stretch (basic and acidic residues) spans 271-280 (GGKDARDGRE). A tr-type G domain is found at 389–558 (PRAPVVTIMG…LLQAEVLELK (170 aa)). A G1 region spans residues 398–405 (GHVDHGKT). Residue 398-405 (GHVDHGKT) coordinates GTP. The tract at residues 423–427 (GITQH) is G2. Residues 444-447 (DTPG) are G3. Residues 444–448 (DTPGH) and 498–501 (NKMD) each bind GTP. The tract at residues 498–501 (NKMD) is G4. Positions 534 to 536 (SAK) are G5.

It belongs to the TRAFAC class translation factor GTPase superfamily. Classic translation factor GTPase family. IF-2 subfamily.

It localises to the cytoplasm. In terms of biological role, one of the essential components for the initiation of protein synthesis. Protects formylmethionyl-tRNA from spontaneous hydrolysis and promotes its binding to the 30S ribosomal subunits. Also involved in the hydrolysis of GTP during the formation of the 70S ribosomal complex. The chain is Translation initiation factor IF-2 from Shewanella sp. (strain ANA-3).